A 112-amino-acid chain; its full sequence is Cytoplasmic envelopment protein 3 (112 aa).

A lipid anchor (N-myristoyl glycine; by host) is attached at Gly2. A disordered region spans residues 84–112; sequence GANKGGGKRTSSLKSAKNGAGVKKKVRAL.

The protein belongs to the herpesviridae cytoplasmic envelopment protein 3 family. Interacts with cytoplasmic envelopment protein 2; this interaction is essential for the proper localization of each protein to the assembly complex and thus for the production of infectious virus. Post-translationally, myristoylation and palmitoylation (probably on one or more of the nearby cysteines at the N-terminus) enable membrane-binding and Golgi apparatus-specific targeting and are essential for efficient packaging. In terms of processing, phosphorylated. Phosphorylation does not seem to be required for recycling to the host Golgi apparatus. Packaging is selective for underphosphorylated forms.

It localises to the virion tegument. The protein resides in the virion membrane. The protein localises to the host cell membrane. It is found in the host Golgi apparatus membrane. In terms of biological role, plays an important role in the cytoplasmic envelopment of tegument proteins and capsids during the assembly and egress processes. Also participates in viral entry at the fusion step probably by regulating the core fusion machinery. This chain is Cytoplasmic envelopment protein 3 (UL99), found in Murid herpesvirus 1 (strain K181) (MuHV-1).